The primary structure comprises 745 residues: Serine/threonine-protein kinase GG21441 (745 aa).

The disordered stretch occupies residues 49 to 73 (RNQQQNVQKDFDSHNRDCDSPVSST). Over residues 57–67 (KDFDSHNRDCD) the composition is skewed to basic and acidic residues. 2 Doublecortin domains span residues 159 to 245 (LRIK…VEYN) and 315 to 398 (RIVT…AEDF). Residues 479–737 (YTLGRIIGDG…SEDILDHYWT (259 aa)) form the Protein kinase domain. Residues 485-493 (IGDGNFAIV) and lysine 508 contribute to the ATP site. Aspartate 600 (proton acceptor) is an active-site residue.

It belongs to the protein kinase superfamily. CAMK Ser/Thr protein kinase family. CaMK subfamily.

It carries out the reaction L-seryl-[protein] + ATP = O-phospho-L-seryl-[protein] + ADP + H(+). The catalysed reaction is L-threonyl-[protein] + ATP = O-phospho-L-threonyl-[protein] + ADP + H(+). The chain is Serine/threonine-protein kinase GG21441 from Drosophila erecta (Fruit fly).